Reading from the N-terminus, the 216-residue chain is Probable methylthioribulose-1-phosphate dehydratase (216 aa).

Cys87 provides a ligand contact to substrate. Positions 105 and 107 each coordinate Zn(2+). Catalysis depends on Glu129, which acts as the Proton donor/acceptor.

It belongs to the aldolase class II family. MtnB subfamily. Requires Zn(2+) as cofactor.

It localises to the cytoplasm. The enzyme catalyses 5-(methylsulfanyl)-D-ribulose 1-phosphate = 5-methylsulfanyl-2,3-dioxopentyl phosphate + H2O. Its pathway is amino-acid biosynthesis; L-methionine biosynthesis via salvage pathway; L-methionine from S-methyl-5-thio-alpha-D-ribose 1-phosphate: step 2/6. Its function is as follows. Catalyzes the dehydration of methylthioribulose-1-phosphate (MTRu-1-P) into 2,3-diketo-5-methylthiopentyl-1-phosphate (DK-MTP-1-P). In Drosophila persimilis (Fruit fly), this protein is Probable methylthioribulose-1-phosphate dehydratase.